The primary structure comprises 306 residues: D-alanine--D-alanine ligase B (306 aa).

Catalysis depends on residues glutamate 15 and serine 150. The ATP-grasp domain maps to 101–303 (KLLWQGAGLP…FSQLVVRILE (203 aa)). 134 to 189 (ISALGLPVIVKPSREGSSVGMSKVVAENALQDALRLAFQHDEEVLIEKWLSGPEFT) serves as a coordination point for ATP. 3 residues coordinate Mg(2+): aspartate 257, glutamate 270, and asparagine 272. Serine 281 is an active-site residue.

It belongs to the D-alanine--D-alanine ligase family. Monomer. Requires Mg(2+) as cofactor. Mn(2+) serves as cofactor.

Its subcellular location is the cytoplasm. The enzyme catalyses 2 D-alanine + ATP = D-alanyl-D-alanine + ADP + phosphate + H(+). It functions in the pathway cell wall biogenesis; peptidoglycan biosynthesis. Its function is as follows. Cell wall formation. The sequence is that of D-alanine--D-alanine ligase B (ddlB) from Escherichia coli O157:H7.